Reading from the N-terminus, the 76-residue chain is cAMP-dependent protein kinase inhibitor alpha (76 aa).

Residue Thr2 is modified to N-acetylthreonine. The segment at 49 to 76 (KTEGEEDAQRSSTEQSGEAQGEAAKSES) is disordered.

The protein belongs to the PKI family.

Its function is as follows. Extremely potent competitive inhibitor of cAMP-dependent protein kinase activity, this protein interacts with the catalytic subunit of the enzyme after the cAMP-induced dissociation of its regulatory chains. This Homo sapiens (Human) protein is cAMP-dependent protein kinase inhibitor alpha (PKIA).